Consider the following 768-residue polypeptide: Valine--tRNA ligase (768 aa).

The short motif at 37-47 (PTVSGKMHMGH) is the 'HIGH' region element. Positions 510 to 514 (KMSKS) match the 'KMSKS' region motif. K513 lines the ATP pocket.

It belongs to the class-I aminoacyl-tRNA synthetase family. ValS type 2 subfamily.

The protein resides in the cytoplasm. The enzyme catalyses tRNA(Val) + L-valine + ATP = L-valyl-tRNA(Val) + AMP + diphosphate. Catalyzes the attachment of valine to tRNA(Val). As ValRS can inadvertently accommodate and process structurally similar amino acids such as threonine, to avoid such errors, it has a 'posttransfer' editing activity that hydrolyzes mischarged Thr-tRNA(Val) in a tRNA-dependent manner. The polypeptide is Valine--tRNA ligase (Picrophilus torridus (strain ATCC 700027 / DSM 9790 / JCM 10055 / NBRC 100828 / KAW 2/3)).